Reading from the N-terminus, the 111-residue chain is Large ribosomal subunit protein uL22 (111 aa).

The protein belongs to the universal ribosomal protein uL22 family. Part of the 50S ribosomal subunit.

Functionally, this protein binds specifically to 23S rRNA; its binding is stimulated by other ribosomal proteins, e.g. L4, L17, and L20. It is important during the early stages of 50S assembly. It makes multiple contacts with different domains of the 23S rRNA in the assembled 50S subunit and ribosome. In terms of biological role, the globular domain of the protein is located near the polypeptide exit tunnel on the outside of the subunit, while an extended beta-hairpin is found that lines the wall of the exit tunnel in the center of the 70S ribosome. The protein is Large ribosomal subunit protein uL22 of Polynucleobacter necessarius subsp. necessarius (strain STIR1).